The following is an 89-amino-acid chain: MSLDKGTKEEITKKFQLHEKDTGSADVQIAILTEHITELKEHLKRSPKDQNSRLALLKLVGQRRKLLEYLNSTDTERYKNLITRLNLRK.

The protein belongs to the universal ribosomal protein uS15 family. Part of the 30S ribosomal subunit. Forms a bridge to the 50S subunit in the 70S ribosome, contacting the 23S rRNA.

Its function is as follows. One of the primary rRNA binding proteins, it binds directly to 16S rRNA where it helps nucleate assembly of the platform of the 30S subunit by binding and bridging several RNA helices of the 16S rRNA. In terms of biological role, forms an intersubunit bridge (bridge B4) with the 23S rRNA of the 50S subunit in the ribosome. This is Small ribosomal subunit protein uS15 from Chlamydia caviae (strain ATCC VR-813 / DSM 19441 / 03DC25 / GPIC) (Chlamydophila caviae).